We begin with the raw amino-acid sequence, 409 residues long: E3 ubiquitin-protein ligase MARCHF4 (409 aa).

The signal sequence occupies residues 1–17; it reads MLMPLGGLLWWWCCCCG. The interval 92–133 is disordered; that stretch reads GPREAVGRETPPLPPPPPLPPSGDDDWDGPATGPPASLLSSA. Over residues 102–112 the composition is skewed to pro residues; that stretch reads PPLPPPPPLPP. The segment at 154-214 adopts an RING-CH-type zinc-finger fold; that stretch reads DSGMRTPLCR…ELCYYKYHVI (61 aa). Zn(2+) is bound by residues C162, C165, C178, C180, H188, C191, C204, and C207. Helical transmembrane passes span 242–262 and 271–291; these read LGSLFLIASISWLIWSTFSPS and LFQICYGMYGFMDVVCIGLII. Disordered regions lie at residues 323-372 and 389-409; these read EDQK…GPVS and PHDQRSTQGSGRELVMRVTTV. The segment covering 328–343 has biased composition (polar residues); sequence GGRTNLQTSSSAQANL.

It is found in the golgi apparatus membrane. The enzyme catalyses S-ubiquitinyl-[E2 ubiquitin-conjugating enzyme]-L-cysteine + [acceptor protein]-L-lysine = [E2 ubiquitin-conjugating enzyme]-L-cysteine + N(6)-ubiquitinyl-[acceptor protein]-L-lysine.. It participates in protein modification; protein ubiquitination. Functionally, E3 ubiquitin-protein ligase that may mediate ubiquitination of MHC-I and CD4, and promote their subsequent endocytosis and sorting to lysosomes via multivesicular bodies. E3 ubiquitin ligases accept ubiquitin from an E2 ubiquitin-conjugating enzyme in the form of a thioester and then directly transfer the ubiquitin to targeted substrates. This is E3 ubiquitin-protein ligase MARCHF4 (Marchf4) from Mus musculus (Mouse).